The following is a 272-amino-acid chain: Probable feruloyl esterase C (272 aa).

The first 22 residues, 1–22, serve as a signal peptide directing secretion; that stretch reads MVPTIIYSAILALSAFTPSVFA.

This sequence belongs to the faeC family.

It localises to the secreted. The enzyme catalyses feruloyl-polysaccharide + H2O = ferulate + polysaccharide.. In terms of biological role, involved in degradation of plant cell walls. Hydrolyzes the feruloyl-arabinose ester bond in arabinoxylans, and the feruloyl-galactose ester bond in pectin. Active against paranitrophenyl-acetate, methyl ferulate and wheat arabinoxylan. The chain is Probable feruloyl esterase C (faeC) from Aspergillus fumigatus (strain ATCC MYA-4609 / CBS 101355 / FGSC A1100 / Af293) (Neosartorya fumigata).